We begin with the raw amino-acid sequence, 463 residues long: Mitochondrial dynamics protein MID51 (463 aa).

The Mitochondrial intermembrane portion of the chain corresponds to 1 to 23 (MAGAGERKGKKDDNGIGTAIDFV). Residues 24-46 (LSNARLVLGVGGAAMLGIATLAV) traverse the membrane as a helical segment. Residues 47–463 (KRMYDRAISA…LSEPEVLLQT (417 aa)) are Cytoplasmic-facing. Residues 49–195 (MYDRAISAPT…LSGSLYDDLQ (147 aa)) are dimerization. Serine 55, serine 59, serine 79, and serine 94 each carry phosphoserine. A disordered region spans residues 57-77 (PTSPTRLSHSGKRSWEEPNWM). The important for interaction with DNM1L stretch occupies residues 160 to 169 (AAVDICAELR). ADP is bound by residues serine 187, serine 189, and histidine 201. Residues 234 to 243 (RRENPEYFPR) form an important for interaction with DNM1L region. The ADP site is built by serine 340, arginine 342, and lysine 368.

The protein belongs to the MID49/MID51 family. In terms of assembly, homodimer. Interacts with DNM1L.

It is found in the mitochondrion outer membrane. Functionally, mitochondrial outer membrane protein which regulates mitochondrial fission/fusion dynamics. Promotes the recruitment and association of the fission mediator dynamin-related protein 1 (DNM1L) to the mitochondrial surface independently of the mitochondrial fission FIS1 and MFF proteins. Regulates DNM1L GTPase activity and DNM1L oligomerization. Binds ADP and can also bind GDP, although with lower affinity. Does not bind CDP, UDP, ATP, AMP or GTP. Inhibits DNM1L GTPase activity in the absence of bound ADP. Requires ADP to stimulate DNM1L GTPase activity and the assembly of DNM1L into long, oligomeric tubules with a spiral pattern, as opposed to the ring-like DNM1L oligomers observed in the absence of bound ADP. Does not require ADP for its function in recruiting DNM1L. In Rattus norvegicus (Rat), this protein is Mitochondrial dynamics protein MID51 (Mief1).